The chain runs to 150 residues: Cytochrome c oxidase subunit 5A, mitochondrial (150 aa).

Residues 1–41 (MLGAALRRCAVAAAARAGPRGLLHSAPTPGPAAAIQSVRCY) constitute a mitochondrion transit peptide. The SIFI-degron motif lies at 2–17 (LGAALRRCAVAAAARA). 2 positions are modified to N6-acetyllysine: Lys-87 and Lys-113. Thr-141 bears the Phosphothreonine mark.

The protein belongs to the cytochrome c oxidase subunit 5A family. In terms of assembly, component of the cytochrome c oxidase (complex IV, CIV), a multisubunit enzyme composed of 14 subunits. The complex is composed of a catalytic core of 3 subunits MT-CO1, MT-CO2 and MT-CO3, encoded in the mitochondrial DNA, and 11 supernumerary subunits COX4I, COX5A, COX5B, COX6A, COX6B, COX6C, COX7A, COX7B, COX7C, COX8 and NDUFA4, which are encoded in the nuclear genome. The complex exists as a monomer or a dimer and forms supercomplexes (SCs) in the inner mitochondrial membrane with NADH-ubiquinone oxidoreductase (complex I, CI) and ubiquinol-cytochrome c oxidoreductase (cytochrome b-c1 complex, complex III, CIII), resulting in different assemblies (supercomplex SCI(1)III(2)IV(1) and megacomplex MCI(2)III(2)IV(2)). Interacts with AFG1L. Interacts with RAB5IF. Post-translationally, in response to mitochondrial stress, the precursor protein is ubiquitinated by the SIFI complex in the cytoplasm before mitochondrial import, leading to its degradation. Within the SIFI complex, UBR4 initiates ubiquitin chain that are further elongated or branched by KCMF1.

The protein localises to the mitochondrion inner membrane. The protein operates within energy metabolism; oxidative phosphorylation. In terms of biological role, component of the cytochrome c oxidase, the last enzyme in the mitochondrial electron transport chain which drives oxidative phosphorylation. The respiratory chain contains 3 multisubunit complexes succinate dehydrogenase (complex II, CII), ubiquinol-cytochrome c oxidoreductase (cytochrome b-c1 complex, complex III, CIII) and cytochrome c oxidase (complex IV, CIV), that cooperate to transfer electrons derived from NADH and succinate to molecular oxygen, creating an electrochemical gradient over the inner membrane that drives transmembrane transport and the ATP synthase. Cytochrome c oxidase is the component of the respiratory chain that catalyzes the reduction of oxygen to water. Electrons originating from reduced cytochrome c in the intermembrane space (IMS) are transferred via the dinuclear copper A center (CU(A)) of subunit 2 and heme A of subunit 1 to the active site in subunit 1, a binuclear center (BNC) formed by heme A3 and copper B (CU(B)). The BNC reduces molecular oxygen to 2 water molecules using 4 electrons from cytochrome c in the IMS and 4 protons from the mitochondrial matrix. This Plecturocebus donacophilus (Bolivian gray titi monkey) protein is Cytochrome c oxidase subunit 5A, mitochondrial (COX5A).